The chain runs to 436 residues: GDP-mannose 6-dehydrogenase (436 aa).

Y10, V11, D30, K35, T86, and T124 together coordinate NAD(+). E161, K210, N214, H217, N225, Y256, Y257, R259, and G265 together coordinate GDP-alpha-D-mannuronate. Residue C268 is part of the active site. Residue K271 participates in NAD(+) binding. K324 serves as a coordination point for GDP-alpha-D-mannuronate. R331 contacts NAD(+).

Belongs to the UDP-glucose/GDP-mannose dehydrogenase family.

It catalyses the reaction GDP-alpha-D-mannose + 2 NAD(+) + H2O = GDP-alpha-D-mannuronate + 2 NADH + 3 H(+). Its pathway is glycan biosynthesis; alginate biosynthesis. Catalyzes the oxidation of guanosine diphospho-D-mannose (GDP-D-mannose) to GDP-D-mannuronic acid, a precursor for alginate polymerization. The alginate layer causes a mucoid phenotype and is essential for cyst formation. The chain is GDP-mannose 6-dehydrogenase (algD) from Azotobacter vinelandii.